The following is a 197-amino-acid chain: V-type ATP synthase subunit E 2 (197 aa).

It belongs to the V-ATPase E subunit family.

Functionally, produces ATP from ADP in the presence of a proton gradient across the membrane. The polypeptide is V-type ATP synthase subunit E 2 (Clostridium tetani (strain Massachusetts / E88)).